The following is a 318-amino-acid chain: Ubiquitin-like domain-containing CTD phosphatase 1 (318 aa).

A Ubiquitin-like domain is found at 3 to 81 (VSVIIKWGGQ…IMMMGTREES (79 aa)). Residues 133-294 (PRPGKRLLVL…YKLSQYLKEI (162 aa)) enclose the FCP1 homology domain. The Mg(2+) site is built by Asp-143, Asp-145, and Asp-253.

It depends on Mg(2+) as a cofactor.

It localises to the nucleus. It catalyses the reaction O-phospho-L-seryl-[protein] + H2O = L-seryl-[protein] + phosphate. The catalysed reaction is O-phospho-L-threonyl-[protein] + H2O = L-threonyl-[protein] + phosphate. Functionally, dephosphorylates 26S nuclear proteasomes, thereby decreasing their proteolytic activity. Recruited to the 19S regulatory particle of the 26S proteasome where it dephosphorylates 19S component psmc2 which impairs psmc2 ATPase activity and disrupts 26S proteasome assembly. Has also been reported to stimulate the proteolytic activity of the 26S proteasome. This chain is Ubiquitin-like domain-containing CTD phosphatase 1 (ublcp1), found in Danio rerio (Zebrafish).